The chain runs to 689 residues: PR domain zinc finger protein 8 (689 aa).

The SET domain occupies 16–131 (KAVQQCLTDI…KDEELLVWYG (116 aa)). Residue Y130 coordinates S-adenosyl-L-methionine. The segment at 155-183 (YTCLECSQRFQFEFPYVAHLRFRCPKRLH) adopts a C2H2-type 1 zinc-finger fold. Disordered regions lie at residues 185 to 333 (ADIS…VGGR) and 397 to 506 (SLQE…QPAR). A compositionally biased stretch (gly residues) spans 193–210 (QGGGVGTKDHGGGGGGGK). 2 stretches are compositionally biased toward low complexity: residues 241–258 (PESSNPSAAAGGSSAKPS) and 273–286 (GGSSCSPAQSLSSG). Residues 322–333 (EGGGGAGLVGGR) are compositionally biased toward gly residues. Residues 423–433 (STPAAASPVGA) are compositionally biased toward low complexity. The segment covering 472–491 (TSGGGGTGAGAAGGAGGGQG) has biased composition (gly residues). 2 consecutive C2H2-type zinc fingers follow at residues 625–648 (NWCAKCNASFRMTSDLVYHMRSHH) and 666–688 (LKCPICNESFRERHHLSRHMTSH).

This sequence belongs to the class V-like SAM-binding methyltransferase superfamily. As to quaternary structure, interacts with EPM2A and NHLRC1. This interaction sequesters EPM2A and NHLRC1 to the nucleus. Interacts with BHLHE22. As to expression, expressed in brain, heart, skeletal muscle, testes, prostate.

Its subcellular location is the nucleus. Probable histone methyltransferase, preferentially acting on 'Lys-9' of histone H3. Involved in the control of steroidogenesis through transcriptional repression of steroidogenesis marker genes such as CYP17A1 and LHCGR. Forms with BHLHE22 a transcriptional repressor complex controlling genes involved in neural development and neuronal differentiation. In the retina, it is required for rod bipolar and type 2 OFF-cone bipolar cell survival. In Homo sapiens (Human), this protein is PR domain zinc finger protein 8 (PRDM8).